Reading from the N-terminus, the 88-residue chain is Phosphocarrier protein HPr (88 aa).

Residues 1 to 88 (MKKIQVVVKD…KAVLEKHQVI (88 aa)) enclose the HPr domain. The Pros-phosphohistidine intermediate role is filled by His15. Ser47 is subject to Phosphoserine; by HPrK/P.

The protein belongs to the HPr family.

Its subcellular location is the cytoplasm. Phosphorylation on Ser-47 inhibits the phosphoryl transfer from enzyme I to HPr. Functionally, general (non sugar-specific) component of the phosphoenolpyruvate-dependent sugar phosphotransferase system (sugar PTS). This major carbohydrate active-transport system catalyzes the phosphorylation of incoming sugar substrates concomitantly with their translocation across the cell membrane. The phosphoryl group from phosphoenolpyruvate (PEP) is transferred to the phosphoryl carrier protein HPr by enzyme I. Phospho-HPr then transfers it to the PTS EIIA domain. Its function is as follows. P-Ser-HPr interacts with the catabolite control protein A (CcpA), forming a complex that binds to DNA at the catabolite response elements cre, operator sites preceding a large number of catabolite-regulated genes. Thus, P-Ser-HPr is a corepressor in carbon catabolite repression (CCR), a mechanism that allows bacteria to coordinate and optimize the utilization of available carbon sources. P-Ser-HPr also plays a role in inducer exclusion, in which it probably interacts with several non-PTS permeases and inhibits their transport activity. The sequence is that of Phosphocarrier protein HPr (ptsH) from Mycoplasma pneumoniae (strain ATCC 29342 / M129 / Subtype 1) (Mycoplasmoides pneumoniae).